The sequence spans 486 residues: Beta-barrel assembly-enhancing protease (486 aa).

A signal peptide spans 1-19; the sequence is MIATLLSSLLLTGPISAGA. Zn(2+) is bound at residue histidine 134. Residue glutamate 135 is part of the active site. Residues histidine 138 and glutamate 199 each coordinate Zn(2+). Aspartate 203 functions as the Proton donor in the catalytic mechanism.

It belongs to the peptidase M48 family. BepA subfamily. Zn(2+) is required as a cofactor.

It is found in the periplasm. In terms of biological role, functions both as a chaperone and a metalloprotease. Maintains the integrity of the outer membrane by promoting either the assembly or the elimination of outer membrane proteins, depending on their folding state. The sequence is that of Beta-barrel assembly-enhancing protease from Yersinia pestis.